The chain runs to 607 residues: MDNLNDALEKLKLTGTECTSDKLDGCLDCLLQALGHNNTESSEKIQQSGILQLFASILNSQSSCASKVAHIVAEIAKNELMRIPCVEADLIPPLVQLLHSKDQEVLLQTGRALGNICYDNHEGRRTVDQEGGAQIVVDHLRSRCTLTDPSSEKLMTVFCGMLMNYSSENDSLQTQLIQMGVIPILVDLLAVHSQNTALTEMCLVAFGNLAELESSKEQFAATNVAEVIVKLFKKQTEHEKREVIFEVLAPLAENDAIKMQLVEAGLVECLLDIVQQTVNSEKDDDVAELKTSSDLMVLLLLGDESMQKLFEGGKGSVFQRVLSWLPSNNHQLQLAGALAIANFARNDGNCIHMVDSEIVQKLLDLLDRHVEDGNVTVQHAALSALRNLAIPVVNKAKMLSAGVTEEVLKFLPSEMPPVQFKLLGTLRMLIDAQAEAAEQLGKNEKLVERLVEWCEAKDHAGVMGESNRLLSALIRHSKSKDVIRTTVQSGGIKHLVTMATSEHVIMQNEALVALGLIAALELQAAERDLESAKLVEVLHRLLSDERSAPEIKYNSMVLICAVMGSEPLHKEVQKLAFLDVVSKLRSHENKTVAQQASLTEQKFTVQS.

ARM repeat units lie at residues 79–118, 170–211, 347–390, 391–431, and 479–519; these read ELMR…NICY, DSLQ…NLAE, DGNC…NLAI, PVVN…MLID, and SKDV…LIAA.

As to quaternary structure, interacts with ralB. Probably interacts with the post-translationally isoprenylated (geranyl-geranylation) forms of ral proteins. Interacts with both GDP-bound and GTP-bound forms of ralA, but interaction is much stronger with ralA-GDP.

Its subcellular location is the cytoplasm. The protein localises to the cytosol. The protein resides in the endoplasmic reticulum. It is found in the mitochondrion. Functionally, stimulates GDP/GTP exchange reaction of a group of small GTP-binding proteins (G proteins) including Rap1a/Rap1b, RhoA, RhoB and KRas, by stimulating the dissociation of GDP from and the subsequent binding of GTP to each small G protein. This chain is Rap1 GTPase-GDP dissociation stimulator 1-B (rap1gds1-b), found in Xenopus laevis (African clawed frog).